A 716-amino-acid polypeptide reads, in one-letter code: Beta-galactosidase (716 aa).

The active-site Proton donor is the E389. E462 functions as the Nucleophile in the catalytic mechanism.

The protein belongs to the glycosyl hydrolase 2 family. Homodimer.

It carries out the reaction Hydrolysis of terminal non-reducing beta-D-galactose residues in beta-D-galactosides.. Its function is as follows. Displays beta-galactosidase activity with the artificial chromogenic substrate o-nitrophenyl-beta-D-galactopyranoside (ONPG). In Thermoanaerobacterium thermosulfurigenes (Clostridium thermosulfurogenes), this protein is Beta-galactosidase.